We begin with the raw amino-acid sequence, 818 residues long: SIT4-associating protein SAP4 (818 aa).

2 disordered regions span residues 33–60 (ETSS…RDRS) and 499–526 (TSNT…KNIK). Residues 509–518 (NNDSNDSNDN) are compositionally biased toward low complexity.

This sequence belongs to the SAPS family. In terms of processing, hyperphosphorylated in the absence of SIT4.

Functionally, associates with the SIT4 phosphatase in a cell cycle dependent manner. May be directly or indirectly involved in SIT4-dependent functions in budding and in normal G1 cyclin expression. The protein is SIT4-associating protein SAP4 (SAP4) of Saccharomyces cerevisiae (strain ATCC 204508 / S288c) (Baker's yeast).